Reading from the N-terminus, the 460-residue chain is tRNA modification GTPase MnmE (460 aa).

Residues Arg23, Glu86, and Arg126 each contribute to the (6S)-5-formyl-5,6,7,8-tetrahydrofolate site. Positions 222-381 (GLSTAIIGRP…LEAAIASLFF (160 aa)) constitute a TrmE-type G domain. Residue Asn232 participates in K(+) binding. GTP is bound by residues 232–237 (NVGKSS), 251–257 (TDIAGTT), and 276–279 (DTAG). Ser236 contributes to the Mg(2+) binding site. Residues Thr251, Ile253, and Thr256 each contribute to the K(+) site. Thr257 contributes to the Mg(2+) binding site. Lys460 contributes to the (6S)-5-formyl-5,6,7,8-tetrahydrofolate binding site.

This sequence belongs to the TRAFAC class TrmE-Era-EngA-EngB-Septin-like GTPase superfamily. TrmE GTPase family. Homodimer. Heterotetramer of two MnmE and two MnmG subunits. K(+) serves as cofactor.

Its subcellular location is the cytoplasm. In terms of biological role, exhibits a very high intrinsic GTPase hydrolysis rate. Involved in the addition of a carboxymethylaminomethyl (cmnm) group at the wobble position (U34) of certain tRNAs, forming tRNA-cmnm(5)s(2)U34. This Exiguobacterium sibiricum (strain DSM 17290 / CCUG 55495 / CIP 109462 / JCM 13490 / 255-15) protein is tRNA modification GTPase MnmE.